A 501-amino-acid polypeptide reads, in one-letter code: Cytokinin dehydrogenase 2 (501 aa).

An N-terminal signal peptide occupies residues 1–22 (MANLRLMITLITVLMITKSSNG). N-linked (GlcNAc...) asparagine glycans are attached at residues asparagine 32 and asparagine 51. An FAD-binding PCMH-type domain is found at 53–226 (TTVTPGGVIC…TRARIVLDHA (174 aa)). FAD contacts are provided by alanine 87, glycine 89, and glycine 91. Histidine 92 is modified (pros-8alpha-FAD histidine). Serine 93 and glutamine 97 together coordinate FAD. Asparagine 107 is a glycosylation site (N-linked (GlcNAc...) asparagine). FAD contacts are provided by aspartate 150, threonine 155, serine 161, isoleucine 165, isoleucine 216, tyrosine 460, serine 495, and glutamine 498.

Belongs to the oxygen-dependent FAD-linked oxidoreductase family. It depends on FAD as a cofactor. In terms of tissue distribution, expressed in the shoot apex, in stipules, and occasionally in the most apical part of the inflorescence stems. Not detected in roots.

The protein localises to the endoplasmic reticulum. Its subcellular location is the secreted. It is found in the extracellular space. It catalyses the reaction N(6)-dimethylallyladenine + A + H2O = 3-methyl-2-butenal + adenine + AH2. Catalyzes the oxidation of cytokinins, a family of N(6)-substituted adenine derivatives that are plant hormones, where the substituent is an isopentenyl group. Modulates asymmetric cytokinin signaling in emerged lateral roots. Its activity determines cell elongation and number in emerged lateral roots and defines angular growth of lateral roots. This is Cytokinin dehydrogenase 2 (CKX2) from Arabidopsis thaliana (Mouse-ear cress).